A 721-amino-acid polypeptide reads, in one-letter code: Dipeptidyl-peptidase 5 (721 aa).

The first 18 residues, 1 to 18 (MGAFRWLSIAAAASTALA), serve as a signal peptide directing secretion. 4 N-linked (GlcNAc...) asparagine glycosylation sites follow: Asn75, Asn94, Asn151, and Asn254. The tract at residues 271–297 (ARPINGPDSPGTPKGIKGDSSSPVFSP) is disordered. N-linked (GlcNAc...) asparagine glycans are attached at residues Asn380 and Asn450. Catalysis depends on Ser560, which acts as the Charge relay system. Residue Asn607 is glycosylated (N-linked (GlcNAc...) asparagine). Active-site charge relay system residues include Asp643 and His675.

It belongs to the peptidase S9C family. Post-translationally, N-glycosylated. As to expression, expressed in mycelia and conidia.

It localises to the secreted. Its function is as follows. May be involved in metabolism of dipeptides or may affect host defense mechanisms. Has a substrate specificity limited to the hydrolysis of X-Ala, His-Ser, and Ser-Tyr dipeptides at a neutral pH optimum. The sequence is that of Dipeptidyl-peptidase 5 from Aspergillus fumigatus (strain CBS 144.89 / FGSC A1163 / CEA10) (Neosartorya fumigata).